Reading from the N-terminus, the 249-residue chain is Glutathione S-transferase tcpG (249 aa).

In terms of domain architecture, GST N-terminal spans 20–109 (LYVRKAIPAP…YLCDKHDKDG (90 aa)). The 135-residue stretch at 115-249 (NATERAQVTS…TEEEIELHGR (135 aa)) folds into the GST C-terminal domain.

It belongs to the GST superfamily.

The enzyme catalyses RX + glutathione = an S-substituted glutathione + a halide anion + H(+). Its pathway is secondary metabolite biosynthesis. Glutathione S-transferase; part of the gene cluster that mediates the biosynthesis of an unusual class of epipolythiodioxopiperazines (ETPs) lacking the reactive thiol group important for toxicity. Firstly, L-tyrosine is prenylated by tcpD, before undergoing condensation with L-glycine in a reaction catalyzed by the NRPS tcpP leading to the diketopiperazine (DKP) backbone. Afterwards the alpha-carbon of tyrosine is oxidized by the cytochrome P450 tcpC to form a hydroxyl group. However, in contrast other ETP biosynthesis pathways studied so far, tcpC is not able to bishydroxylate the DKP at both alpha-carbon positions, but hydroxylates the alpha-carbon of the tyrosine part and the nitrogen of the glycine part. The next steps involve an alpha,beta-elimination reaction catalyzed by tcpI, a methylation by the methyltransferase tcpN the action of the four enzyme cascade tcpG/K/J/I. Due to a dysfunctional cytochrome P450 monooxygenase tcpC, the pathway leads to the biosynthesis of probable non-toxic metabolites lacking the reactive thiol group. This is Glutathione S-transferase tcpG from Claviceps purpurea (strain 20.1) (Ergot fungus).